The primary structure comprises 399 residues: L-methionine gamma-lyase (399 aa).

Pyridoxal 5'-phosphate is bound by residues 59–61 (YTR) and 89–90 (GM). Position 114 (Tyr114) interacts with substrate. 209–211 (SAT) is a pyridoxal 5'-phosphate binding site. Lys212 bears the N6-(pyridoxal phosphate)lysine mark. A substrate-binding site is contributed by Arg376.

This sequence belongs to the trans-sulfuration enzymes family. L-methionine gamma-lyase subfamily. Homotetramer; dimer of active dimers. Requires pyridoxal 5'-phosphate as cofactor.

The enzyme catalyses L-methionine + H2O = methanethiol + 2-oxobutanoate + NH4(+). Functionally, catalyzes the alpha,gamma-elimination of L-methionine to produce methanethiol, 2-oxobutanoate and ammonia. The polypeptide is L-methionine gamma-lyase (Pseudomonas deceptionensis).